We begin with the raw amino-acid sequence, 250 residues long: Indole-3-glycerol phosphate synthase (250 aa).

It belongs to the TrpC family.

It catalyses the reaction 1-(2-carboxyphenylamino)-1-deoxy-D-ribulose 5-phosphate + H(+) = (1S,2R)-1-C-(indol-3-yl)glycerol 3-phosphate + CO2 + H2O. It functions in the pathway amino-acid biosynthesis; L-tryptophan biosynthesis; L-tryptophan from chorismate: step 4/5. This is Indole-3-glycerol phosphate synthase from Bacillus velezensis (strain DSM 23117 / BGSC 10A6 / LMG 26770 / FZB42) (Bacillus amyloliquefaciens subsp. plantarum).